A 110-amino-acid polypeptide reads, in one-letter code: Large ribosomal subunit protein uL24 (110 aa).

Belongs to the universal ribosomal protein uL24 family. In terms of assembly, part of the 50S ribosomal subunit.

One of two assembly initiator proteins, it binds directly to the 5'-end of the 23S rRNA, where it nucleates assembly of the 50S subunit. In terms of biological role, one of the proteins that surrounds the polypeptide exit tunnel on the outside of the subunit. The sequence is that of Large ribosomal subunit protein uL24 from Chloroflexus aggregans (strain MD-66 / DSM 9485).